We begin with the raw amino-acid sequence, 463 residues long: Quinolone resistance protein NorB (463 aa).

Transmembrane regions (helical) follow at residues Ile-17–Val-37, Ile-53–Ala-73, Ile-86–Ile-106, Ile-107–Ile-127, Tyr-142–Ala-162, Leu-165–Ile-185, Phe-201–Thr-221, Ser-230–Leu-250, Thr-273–Val-293, Tyr-299–Ile-319, Pro-334–Leu-354, Ile-357–Tyr-377, Met-403–Val-423, and Ile-435–Val-455.

Belongs to the major facilitator superfamily. TCR/Tet family.

It localises to the cell membrane. Its function is as follows. Multidrug efflux pump that acts independently of NorA and is one of the factors that confers resistance against diverse quinolones and chemical compounds. The polypeptide is Quinolone resistance protein NorB (norB) (Staphylococcus aureus (strain USA300)).